The sequence spans 210 residues: Chaperone protein TorD (210 aa).

This sequence belongs to the TorD/DmsD family. TorD subfamily.

It is found in the cytoplasm. In terms of biological role, involved in the biogenesis of TorA. Acts on TorA before the insertion of the molybdenum cofactor and, as a result, probably favors a conformation of the apoenzyme that is competent for acquiring the cofactor. This is Chaperone protein TorD from Salmonella dublin (strain CT_02021853).